The primary structure comprises 1097 residues: MRYAELQVTTHFSFLRGASSAIELFETAKSLGIDAIGVVDRNSLAGIVRALEASRATGVRLVVGCRLDLQDGMSILVYPTDRTAYSRLARLITLGKGRGGKDNCILMLDDIAQYGEGLLGILVPDLADDTCAVQLRKMAEVFGDLAYLSLCLRRRPNDQLRLHELSNMATRFKVKTVVTNDVLFHEPGRRQLQDIVTCIRNNTTIDTVGFERERHADRYLKPPEEMERLFPRYRQALRRTMEIVDRCKFSLEELTYQYPEEAIVPRKTAQESLEHYVWQCVPDRYPQGLPPKTLQIIRHELDLIHKMKYAPYFLTVFSIVRFARAKGILCQGRGSAANSAVCYILGVTSIDPETNNLLFERFVSQERDEPPDIDVDFEHERREEVIQWIYKTYGKEKAALCATVNRYRAKGAIRDVGKALGLPEDLIKALSSGMWSWSQETSDRNVRELNLNPDDRRLTLTLQLAQQLMGAPRHLGQHPGGFVLTHDRLDDLVPIEPSTMEDRQIIEWDKDDVEALKFMKVDVLALGMLTCMSKVFALIREHKGDDLDLAKIRQEDKATYEMICKADTLGTFQIESRAQMAMLPRLKPKTFYDLVVQVAIVRPGPIQGDMVHPYLRRREKKEDVDYPTPELEAVLGKTLGVPLFQESAMRVAMVCAGFTGGEADQLRKSMATFKFTGGVSRFKEKLVSGMVKNGYTPEFAEKTFSRLEGFGSYGFPESHAASFALIAYASNYVKCHFPDVFCAALLNSQPMGFYAPAQIVGDARAHGVEVRPVCVNRSRWDCTLERIGTTQQHAVRLGMRMVKGLVVADVARIVAARMNGPFDSVDDMWRRSGVPAASLVELAHADAFQPSLKLARRDVLWAIKALRDEPLPLFAAAAEREMKTIAEQNEPEVELRQMTKGHNVVEDYGHIGLTLRDHPIAFLRTDLAKRNIVTCEEAMTARDGRWVITAGLVLVRQKPGSAKGVMFITIEDETGPANIVVWPKLFEKRRRIVLGSSMMAIHGRIQREGEVVHLIAQQLFDLTSDLSGLADRDMEFKLPTGRGDEFAHGSPGGGDSRDRSPPKPRDIVVPLCRARHKGIDPEPETMPSAFPKPRDFR.

The tract at residues 1039–1097 (PTGRGDEFAHGSPGGGDSRDRSPPKPRDIVVPLCRARHKGIDPEPETMPSAFPKPRDFR) is disordered. The segment covering 1055–1066 (DSRDRSPPKPRD) has biased composition (basic and acidic residues).

The protein belongs to the DNA polymerase type-C family. DnaE2 subfamily.

It is found in the cytoplasm. The enzyme catalyses DNA(n) + a 2'-deoxyribonucleoside 5'-triphosphate = DNA(n+1) + diphosphate. In terms of biological role, DNA polymerase involved in damage-induced mutagenesis and translesion synthesis (TLS). It is not the major replicative DNA polymerase. The polypeptide is Error-prone DNA polymerase (Allorhizobium ampelinum (strain ATCC BAA-846 / DSM 112012 / S4) (Agrobacterium vitis (strain S4))).